Reading from the N-terminus, the 207-residue chain is Large ribosomal subunit protein uL4 (207 aa).

Positions 56–76 (EVRGGGRKPWRQKGTGRARAG) are disordered. Residues 60–71 (GGRKPWRQKGTG) show a composition bias toward basic residues.

It belongs to the universal ribosomal protein uL4 family. Part of the 50S ribosomal subunit.

Its function is as follows. One of the primary rRNA binding proteins, this protein initially binds near the 5'-end of the 23S rRNA. It is important during the early stages of 50S assembly. It makes multiple contacts with different domains of the 23S rRNA in the assembled 50S subunit and ribosome. Functionally, forms part of the polypeptide exit tunnel. This Desulfitobacterium hafniense (strain DSM 10664 / DCB-2) protein is Large ribosomal subunit protein uL4.